The following is an 817-amino-acid chain: Probable beta-glucosidase G (817 aa).

An N-terminal signal peptide occupies residues 1–20; the sequence is MASIAHLIFSGLLAATVANS. Asn-40, Asn-58, Asn-229, and Asn-276 each carry an N-linked (GlcNAc...) asparagine glycan. Asp-304 is a catalytic residue. N-linked (GlcNAc...) asparagine glycosylation is found at Asn-343, Asn-350, Asn-402, Asn-507, Asn-563, Asn-584, Asn-623, Asn-662, Asn-679, and Asn-715.

The protein belongs to the glycosyl hydrolase 3 family.

It localises to the secreted. It carries out the reaction Hydrolysis of terminal, non-reducing beta-D-glucosyl residues with release of beta-D-glucose.. It functions in the pathway glycan metabolism; cellulose degradation. In terms of biological role, beta-glucosidases are one of a number of cellulolytic enzymes involved in the degradation of cellulosic biomass. Catalyzes the last step releasing glucose from the inhibitory cellobiose. The sequence is that of Probable beta-glucosidase G (bglG) from Neosartorya fischeri (strain ATCC 1020 / DSM 3700 / CBS 544.65 / FGSC A1164 / JCM 1740 / NRRL 181 / WB 181) (Aspergillus fischerianus).